The chain runs to 82 residues: Cytochrome b-c1 complex subunit 8 (82 aa).

The Mitochondrial matrix segment spans residues Met-1–Leu-39. At Ser-16 the chain carries Phosphoserine. Lys-33 is subject to N6-acetyllysine; alternate. An N6-succinyllysine; alternate modification is found at Lys-33. The chain crosses the membrane as a helical span at residues Arg-40–Ala-68. Over Gln-69–Lys-82 the chain is Mitochondrial intermembrane.

This sequence belongs to the UQCRQ/QCR8 family. As to quaternary structure, component of the ubiquinol-cytochrome c oxidoreductase (cytochrome b-c1 complex, complex III, CIII), a multisubunit enzyme composed of 11 subunits. The complex is composed of 3 respiratory subunits cytochrome b, cytochrome c1 and Rieske protein UQCRFS1, 2 core protein subunits UQCRC1/QCR1 and UQCRC2/QCR2, and 6 low-molecular weight protein subunits UQCRH/QCR6, UQCRB/QCR7, UQCRQ/QCR8, UQCR10/QCR9, UQCR11/QCR10 and subunit 9, the cleavage product of Rieske protein UQCRFS1. The complex exists as an obligatory dimer and forms supercomplexes (SCs) in the inner mitochondrial membrane with NADH-ubiquinone oxidoreductase (complex I, CI) and cytochrome c oxidase (complex IV, CIV), resulting in different assemblies (supercomplex SCI(1)III(2)IV(1) and megacomplex MCI(2)III(2)IV(2)). Interacts with UQCC6.

Its subcellular location is the mitochondrion inner membrane. Functionally, component of the ubiquinol-cytochrome c oxidoreductase, a multisubunit transmembrane complex that is part of the mitochondrial electron transport chain which drives oxidative phosphorylation. The respiratory chain contains 3 multisubunit complexes succinate dehydrogenase (complex II, CII), ubiquinol-cytochrome c oxidoreductase (cytochrome b-c1 complex, complex III, CIII) and cytochrome c oxidase (complex IV, CIV), that cooperate to transfer electrons derived from NADH and succinate to molecular oxygen, creating an electrochemical gradient over the inner membrane that drives transmembrane transport and the ATP synthase. The cytochrome b-c1 complex catalyzes electron transfer from ubiquinol to cytochrome c, linking this redox reaction to translocation of protons across the mitochondrial inner membrane, with protons being carried across the membrane as hydrogens on the quinol. In the process called Q cycle, 2 protons are consumed from the matrix, 4 protons are released into the intermembrane space and 2 electrons are passed to cytochrome c. The sequence is that of Cytochrome b-c1 complex subunit 8 (Uqcrq) from Rattus norvegicus (Rat).